A 154-amino-acid chain; its full sequence is Nascent polypeptide-associated complex subunit beta (154 aa).

The NAC-A/B domain maps to 34-99 (EQDDTKLIEA…PQEKDVTQLI (66 aa)). Residues 125-154 (KNPELNAGGAEGAEEDIPDLIEGQKFDDVE) form a disordered region.

It belongs to the NAC-beta family. Part of the nascent polypeptide-associated complex (NAC), consisting of EGD2 and EGD1. NAC associates with ribosomes via EGD1.

It localises to the cytoplasm. It is found in the nucleus. In terms of biological role, component of the nascent polypeptide-associated complex (NAC), a dynamic component of the ribosomal exit tunnel, protecting the emerging polypeptides from interaction with other cytoplasmic proteins to ensure appropriate nascent protein targeting. The NAC complex also promotes mitochondrial protein import by enhancing productive ribosome interactions with the outer mitochondrial membrane and blocks the inappropriate interaction of ribosomes translating non-secretory nascent polypeptides with translocation sites in the membrane of the endoplasmic reticulum. EGD1 may act as a transcription factor that exert a negative effect on the expression of several genes that are transcribed by RNA polymerase II. The sequence is that of Nascent polypeptide-associated complex subunit beta (EGD1) from Debaryomyces hansenii (strain ATCC 36239 / CBS 767 / BCRC 21394 / JCM 1990 / NBRC 0083 / IGC 2968) (Yeast).